A 1381-amino-acid chain; its full sequence is Hepatocyte growth factor receptor (1381 aa).

A signal peptide spans 1-24 (MKAPAVLAPGILVLLFTLVQRSNG). Over 25–932 (ECKEALAKSE…VIVQPDQNFT (908 aa)) the chain is Extracellular. In terms of domain architecture, Sema spans 27 to 515 (KEALAKSEMN…TGKKITKIPL (489 aa)). Residue Asn45 is glycosylated (N-linked (GlcNAc...) asparagine). Cystine bridges form between Cys95–Cys101, Cys98–Cys160, Cys133–Cys141, and Cys172–Cys175. N-linked (GlcNAc...) asparagine glycosylation is present at Asn106. A glycan (N-linked (GlcNAc...) asparagine) is linked at Asn149. Asn202 is a glycosylation site (N-linked (GlcNAc...) asparagine). Cystine bridges form between Cys298-Cys363 and Cys385-Cys397. Residues Asn399 and Asn405 are each glycosylated (N-linked (GlcNAc...) asparagine). 4 disulfides stabilise this stretch: Cys520-Cys538, Cys526-Cys561, Cys529-Cys545, and Cys541-Cys551. 3 IPT/TIG domains span residues 563 to 655 (PAIY…FSYV), 657 to 739 (PIIT…FSYR), and 742 to 836 (PIVY…LIYV). O-linked (Man) threonine glycosylation is present at Thr582. Residues Asn607 and Asn635 are each glycosylated (N-linked (GlcNAc...) asparagine). Residues Thr676 and Thr761 are each glycosylated (O-linked (Man) threonine). N-linked (GlcNAc...) asparagine glycosylation is found at Asn785, Asn879, and Asn930. Residues 933-955 (GLIAGVVSISIALLLLLGLFLWL) traverse the membrane as a helical segment. Topologically, residues 956–1381 (KKRKQIKDLG…EDNADDEVDT (426 aa)) are cytoplasmic. Position 966 is a phosphoserine (Ser966). Position 977 is a phosphothreonine (Thr977). 3 positions are modified to phosphoserine: Ser990, Ser997, and Ser1000. Position 1003 is a phosphotyrosine (Tyr1003). A Protein kinase domain is found at 1078-1345 (VHFNEVIGRG…RISAIFSTFI (268 aa)). ATP-binding positions include 1084–1092 (IGRGHFGCV) and Lys1110. Catalysis depends on Asp1204, which acts as the Proton acceptor. The interval 1212–1381 (LDEKFTVKVA…EDNADDEVDT (170 aa)) is interaction with RANBP9. Phosphotyrosine is present on Tyr1230. Tyr1234 and Tyr1235 each carry phosphotyrosine; by autocatalysis. Thr1289 carries the phosphothreonine modification. The segment at 1320-1359 (WHPKAEMRPSFSELVSRISAIFSTFIGEHYVHVNATYVNV) is interaction with MUC20. A phosphotyrosine; by autocatalysis mark is found at Tyr1349 and Tyr1356. Phosphotyrosine is present on Tyr1365.

The protein belongs to the protein kinase superfamily. Tyr protein kinase family. Heterodimer made of an alpha chain (50 kDa) and a beta chain (145 kDa) which are disulfide linked. Binds PLXNB1. Interacts when phosphorylated with downstream effectors including STAT3, PIK3R1, SRC, PCLG1, GRB2 and GAB1. Interacts with SPSB1, SPSB2 and SPSB4. Interacts with INPP5D/SHIP1. When phosphorylated at Tyr-1356, interacts with INPPL1/SHIP2. Interacts with RANBP9 and RANBP10, as well as SPSB1, SPSB2, SPSB3 and SPSB4. SPSB1 binding occurs in the presence and in the absence of HGF, however HGF treatment has a positive effect on this interaction. Interacts with MUC20; prevents interaction with GRB2 and suppresses hepatocyte growth factor-induced cell proliferation. Interacts with GRB10. Interacts with PTPN1 and PTPN2. Interacts with HSP90AA1 and HSP90AB1; the interaction suppresses MET kinase activity. Interacts with tensin TNS3. Interacts (when phosphorylated) with tensin TNS4 (via SH2 domain); the interaction increases MET protein stability by inhibiting MET endocytosis and subsequent lysosomal degradation. In terms of processing, autophosphorylated in response to ligand binding on Tyr-1234 and Tyr-1235 in the kinase domain leading to further phosphorylation of Tyr-1349 and Tyr-1356 in the C-terminal multifunctional docking site. Dephosphorylated by PTPRJ at Tyr-1349 and Tyr-1365. Dephosphorylated by PTPN1 and PTPN2. Ubiquitinated. Ubiquitination by CBL regulates the receptor stability and activity through proteasomal degradation. Post-translationally, O-mannosylation of IPT/TIG domains by TMEM260 is required for protein maturation. O-mannosylated residues are composed of single mannose glycans that are not elongated or modified.

The protein localises to the membrane. The catalysed reaction is L-tyrosyl-[protein] + ATP = O-phospho-L-tyrosyl-[protein] + ADP + H(+). In its inactive state, the C-terminal tail interacts with the catalytic domain and inhibits the kinase activity. Upon ligand binding, the C-terminal tail is displaced and becomes phosphorylated, thus increasing the kinase activity. Functionally, receptor tyrosine kinase that transduces signals from the extracellular matrix into the cytoplasm by binding to hepatocyte growth factor/HGF ligand. Regulates many physiological processes including proliferation, scattering, morphogenesis and survival. Ligand binding at the cell surface induces autophosphorylation of MET on its intracellular domain that provides docking sites for downstream signaling molecules. Following activation by ligand, interacts with the PI3-kinase subunit PIK3R1, PLCG1, SRC, GRB2, STAT3 or the adapter GAB1. Recruitment of these downstream effectors by MET leads to the activation of several signaling cascades including the RAS-ERK, PI3 kinase-AKT, or PLCgamma-PKC. The RAS-ERK activation is associated with the morphogenetic effects while PI3K/AKT coordinates prosurvival effects. During embryonic development, MET signaling plays a role in gastrulation, development and migration of muscles and neuronal precursors, angiogenesis and kidney formation. In adults, participates in wound healing as well as organ regeneration and tissue remodeling. Also promotes differentiation and proliferation of hematopoietic cells. The sequence is that of Hepatocyte growth factor receptor (MET) from Colobus guereza (Mantled guereza).